The following is a 164-amino-acid chain: 6,7-dimethyl-8-ribityllumazine synthase (164 aa).

Residues Phe28, 62-64, and 86-88 each bind 5-amino-6-(D-ribitylamino)uracil; these read ALE and AVI. 91 to 92 provides a ligand contact to (2S)-2-hydroxy-3-oxobutyl phosphate; that stretch reads ET. The active-site Proton donor is the His94. Asn119 is a 5-amino-6-(D-ribitylamino)uracil binding site. Arg133 contributes to the (2S)-2-hydroxy-3-oxobutyl phosphate binding site.

Belongs to the DMRL synthase family.

It catalyses the reaction (2S)-2-hydroxy-3-oxobutyl phosphate + 5-amino-6-(D-ribitylamino)uracil = 6,7-dimethyl-8-(1-D-ribityl)lumazine + phosphate + 2 H2O + H(+). The protein operates within cofactor biosynthesis; riboflavin biosynthesis; riboflavin from 2-hydroxy-3-oxobutyl phosphate and 5-amino-6-(D-ribitylamino)uracil: step 1/2. Catalyzes the formation of 6,7-dimethyl-8-ribityllumazine by condensation of 5-amino-6-(D-ribitylamino)uracil with 3,4-dihydroxy-2-butanone 4-phosphate. This is the penultimate step in the biosynthesis of riboflavin. This is 6,7-dimethyl-8-ribityllumazine synthase from Nitrosomonas europaea (strain ATCC 19718 / CIP 103999 / KCTC 2705 / NBRC 14298).